We begin with the raw amino-acid sequence, 82 residues long: Putative membrane protein insertion efficiency factor (82 aa).

This sequence belongs to the UPF0161 family.

The protein localises to the cell inner membrane. Functionally, could be involved in insertion of integral membrane proteins into the membrane. The sequence is that of Putative membrane protein insertion efficiency factor from Rickettsia typhi (strain ATCC VR-144 / Wilmington).